Consider the following 120-residue polypeptide: Large ribosomal subunit protein uL18 (120 aa).

The disordered stretch occupies residues 1–22 (MKLTRRESKNRRHRRVRGKVVG). Positions 8–18 (SKNRRHRRVRG) are enriched in basic residues.

This sequence belongs to the universal ribosomal protein uL18 family. As to quaternary structure, part of the 50S ribosomal subunit; part of the 5S rRNA/L5/L18/L25 subcomplex. Contacts the 5S and 23S rRNAs.

Its function is as follows. This is one of the proteins that bind and probably mediate the attachment of the 5S RNA into the large ribosomal subunit, where it forms part of the central protuberance. The sequence is that of Large ribosomal subunit protein uL18 from Nostoc punctiforme (strain ATCC 29133 / PCC 73102).